The following is a 341-amino-acid chain: 5-formaminoimidazole-4-carboxamide-1-(beta)-D-ribofuranosyl 5'-monophosphate synthetase (341 aa).

His10 and Thr77 together coordinate 5-amino-1-(5-phospho-beta-D-ribosyl)imidazole-4-carboxamide. Positions 106–317 (DRSLKERLMR…YYGLLFDEPI (212 aa)) constitute an ATP-grasp domain. ATP contacts are provided by residues 132–188 (DTLV…VLAY) and Glu210. Asn238 serves as a coordination point for 5-amino-1-(5-phospho-beta-D-ribosyl)imidazole-4-carboxamide. 2 residues coordinate Mg(2+): Glu277 and Glu290.

This sequence belongs to the phosphohexose mutase family. Mg(2+) serves as cofactor. Mn(2+) is required as a cofactor.

It catalyses the reaction 5-amino-1-(5-phospho-beta-D-ribosyl)imidazole-4-carboxamide + formate + ATP = 5-formamido-1-(5-phospho-D-ribosyl)imidazole-4-carboxamide + ADP + phosphate. The protein operates within purine metabolism; IMP biosynthesis via de novo pathway; 5-formamido-1-(5-phospho-D-ribosyl)imidazole-4-carboxamide from 5-amino-1-(5-phospho-D-ribosyl)imidazole-4-carboxamide (formate route): step 1/1. Functionally, catalyzes the ATP- and formate-dependent formylation of 5-aminoimidazole-4-carboxamide-1-beta-d-ribofuranosyl 5'-monophosphate (AICAR) to 5-formaminoimidazole-4-carboxamide-1-beta-d-ribofuranosyl 5'-monophosphate (FAICAR) in the absence of folates. The chain is 5-formaminoimidazole-4-carboxamide-1-(beta)-D-ribofuranosyl 5'-monophosphate synthetase from Cenarchaeum symbiosum (strain A).